Reading from the N-terminus, the 431-residue chain is Enolase (431 aa).

Gln167 is a (2R)-2-phosphoglycerate binding site. Residue Glu209 is the Proton donor of the active site. Mg(2+) contacts are provided by Asp246, Glu289, and Asp316. (2R)-2-phosphoglycerate contacts are provided by Lys341, Arg370, Ser371, and Lys392. Lys341 acts as the Proton acceptor in catalysis.

The protein belongs to the enolase family. Component of the RNA degradosome, a multiprotein complex involved in RNA processing and mRNA degradation. Requires Mg(2+) as cofactor.

It localises to the cytoplasm. It is found in the secreted. The protein resides in the cell surface. It carries out the reaction (2R)-2-phosphoglycerate = phosphoenolpyruvate + H2O. Its pathway is carbohydrate degradation; glycolysis; pyruvate from D-glyceraldehyde 3-phosphate: step 4/5. Functionally, catalyzes the reversible conversion of 2-phosphoglycerate (2-PG) into phosphoenolpyruvate (PEP). It is essential for the degradation of carbohydrates via glycolysis. This is Enolase from Shewanella putrefaciens (strain CN-32 / ATCC BAA-453).